A 340-amino-acid chain; its full sequence is Protein B17 (340 aa).

This sequence belongs to the orthopoxvirus B17 protein family.

The sequence is that of Protein B17 from Variola virus (isolate Human/India/Ind3/1967) (VARV).